A 578-amino-acid polypeptide reads, in one-letter code: MDSSSSVVYVGSSSKSRNFQSKSKGSITSFSIDSRGTKKSMKTLLIPEPEPTSPEVIESSVSSVSAESETPISIIRKKKQSEPRFYSSPTNTFYTEAKQSFTNTEFSECASISTIGIGGIDLEKNGVMIYRGSIGSDVSDESSSSGLSNAAYKPHRDNNDKRWVAIQEVRSRVGSSLEAKDFKLIKKLGGGDIGNVYLAELIGTGVSFAVKVMEKAAIAARKKLVRAQTEKEILQSLDHPFLPTLYSHFETEMNSCLVMEFCPGGDLHSLRQKQRGKYFPEQAARFYVAEVLLAMEYLHMLGIIYRDLKPENVLVREDGHIMLSDFDLSLRCAVSPTLVRFAAITLESKSSSYCIQPTCVDQSSCIVQPDCIQPVCFTPRFLSKGKHRKKSNDMSRQIRPLPELIAEPTSARSMSFVGTHEYLAPEIIKGEGHGSAVDWWTFGIFLYELLFGITPFRGGDNRATLFNVVGQPLRFPEHPNVSFAARDLIRGLLVKEPQHRLAYRRGATEIKQHPFFQSVNWALIRCTSPPQIPQPVKPMDQAHSVRHGFSQGHGHVGYDKPPTVDVKPSGNYLEIDFF.

Over residues 1–24 the composition is skewed to low complexity; the sequence is MDSSSSVVYVGSSSKSRNFQSKSK. The segment at 1–64 is disordered; the sequence is MDSSSSVVYV…EVIESSVSSV (64 aa). Positions 25-34 are enriched in polar residues; that stretch reads GSITSFSIDS. Over residues 53–64 the composition is skewed to low complexity; that stretch reads SPEVIESSVSSV. The 335-residue stretch at 182–516 folds into the Protein kinase domain; the sequence is FKLIKKLGGG…ATEIKQHPFF (335 aa). ATP-binding positions include 188-196 and K211; that span reads LGGGDIGNV. D307 serves as the catalytic Proton acceptor. Residues 325–426 are activation loop; sequence DFDLSLRCAV…VGTHEYLAPE (102 aa). A PIF motif is present at residues 575–578; that stretch reads IDFF.

This sequence belongs to the protein kinase superfamily. AGC Ser/Thr protein kinase family. Expressed predominantly in root tissue with lower levels found in leaf, stem, seed and flower.

It localises to the cell membrane. The catalysed reaction is L-seryl-[protein] + ATP = O-phospho-L-seryl-[protein] + ADP + H(+). It carries out the reaction L-threonyl-[protein] + ATP = O-phospho-L-threonyl-[protein] + ADP + H(+). In terms of biological role, protein kinase that regulates the auxin transport activity of PIN auxin efflux facilitators by direct phosphorylation. D6PK-mediated PIN phosphorylation promotes auxin transport in the hypocotyl and this is a prerequisite for PHOT1-dependent hypocotyl bending. This is Serine/threonine-protein kinase D6PKL3 (D6PKL3) from Arabidopsis thaliana (Mouse-ear cress).